Consider the following 505-residue polypeptide: Histidine ammonia-lyase (505 aa).

The 5-imidazolinone (Ala-Gly) cross-link spans alanine 144–glycine 146. 2,3-didehydroalanine (Ser) is present on serine 145.

The protein belongs to the PAL/histidase family. Contains an active site 4-methylidene-imidazol-5-one (MIO), which is formed autocatalytically by cyclization and dehydration of residues Ala-Ser-Gly.

The protein localises to the cytoplasm. It carries out the reaction L-histidine = trans-urocanate + NH4(+). It functions in the pathway amino-acid degradation; L-histidine degradation into L-glutamate; N-formimidoyl-L-glutamate from L-histidine: step 1/3. This is Histidine ammonia-lyase from Legionella pneumophila (strain Corby).